The primary structure comprises 446 residues: MKLFGTDGVRGKAGEKLTAFSAMKLGLAAGIYFRKQSKTNKILVGKDTRRSGYMIENALVSGLTAVGYNVIQIGPMPTPAIAYLTEDMRCDAGIMISASHNPFDDNGIKFFNRFGFKLDEEAEREIEAIYADEALLEASQKSGKEIGASKRIDDVVGRYIVHIKNSFPKELSLHGVRMVLDTANGAAYKVAPTIFSELGAEVFVINDAPNGHNINESCGATQPLMLSEEVKRVRADIGFALDGDADRLVVVDERGEVVDGDKLIGALAMHLKNSHTLEKPLAVATVMSNLALEEFLAKAKIKLLRAGVGDKYVLEMMQKEGANFGGEQSGHLIFSDFAKTGDGLVSALQTMAFVLRSGERASRALNIFDLYPQKLVNLPIKQKKELKEIEGFEALMSEIESQGFRQLIRYSGTENKLRILLEGKDGRALEKWMERCVEFFKATLGG.

The active-site Phosphoserine intermediate is the S99. Mg(2+) is bound by residues S99, D242, D244, and D246. At S99 the chain carries Phosphoserine.

This sequence belongs to the phosphohexose mutase family. The cofactor is Mg(2+). In terms of processing, activated by phosphorylation.

The catalysed reaction is alpha-D-glucosamine 1-phosphate = D-glucosamine 6-phosphate. Functionally, catalyzes the conversion of glucosamine-6-phosphate to glucosamine-1-phosphate. This is Phosphoglucosamine mutase from Wolinella succinogenes (strain ATCC 29543 / DSM 1740 / CCUG 13145 / JCM 31913 / LMG 7466 / NCTC 11488 / FDC 602W) (Vibrio succinogenes).